Reading from the N-terminus, the 86-residue chain is High affinity immunoglobulin epsilon receptor subunit gamma (86 aa).

A signal peptide spans methionine 1–alanine 18. Residues leucine 19–glutamine 23 lie on the Extracellular side of the membrane. The chain crosses the membrane as a helical span at residues leucine 24 to cysteine 44. Over arginine 45–glutamine 86 the chain is Cytoplasmic. In terms of domain architecture, ITAM spans threonine 54–glutamate 82. The residue at position 65 (tyrosine 65) is a Phosphotyrosine. Serine 69 carries the post-translational modification Phosphoserine. Phosphotyrosine is present on tyrosine 76. Threonine 78 carries the post-translational modification Phosphothreonine.

Belongs to the CD3Z/FCER1G family. As to quaternary structure, igE Fc receptor is a tetramer of an alpha chain, a beta chain, and two disulfide linked gamma chains. Associates with FCGR1A; forms a functional signaling complex. The signaling subunit of immunoglobulin gamma (IgG) Fc receptor complex. As a homodimer or a heterodimer of CD247 and FCER1G, associates with the ligand binding subunit FCGR3A to form a functional receptor complex. Associates with CLEC6A. Interacts with CLEC4E. Interacts (via ITAM domain) with SYK (via SH2 domains); activates SYK, enabling integrin-mediated activation of neutrophils and macrophages. Interacts with CSF2RB and recruits SYK in response to IL3 stimulation; this interaction is direct. Interacts with CD300LH; the interaction may be indirect. Interacts with CD300LD. Interacts with TARM1.

Its subcellular location is the cell membrane. Adapter protein containing an immunoreceptor tyrosine-based activation motif (ITAM) that transduces activation signals from various immunoreceptors. As a component of the high-affinity immunoglobulin E (IgE) receptor, mediates allergic inflammatory signaling in mast cells. As a constitutive component of interleukin-3 receptor complex, selectively mediates interleukin 4/IL4 production by basophils priming T-cells toward effector T-helper 2 subset. Associates with pattern recognition receptors CLEC4D and CLEC4E to form a functional signaling complex in myeloid cells. Binding of mycobacterial trehalose 6,6'-dimycolate (TDM) to this receptor complex leads to phosphorylation of ITAM, triggering activation of SYK, CARD9 and NF-kappa-B, consequently driving maturation of antigen-presenting cells and shaping antigen-specific priming of T-cells toward effector T-helper 1 and T-helper 17 cell subtypes. May function cooperatively with other activating receptors. Functionally linked to integrin beta-2/ITGB2-mediated neutrophil activation. Also involved in integrin alpha-2/ITGA2-mediated platelet activation. The protein is High affinity immunoglobulin epsilon receptor subunit gamma (FCER1G) of Cavia porcellus (Guinea pig).